The sequence spans 92 residues: Conotoxin Im9.4 (92 aa).

An N-terminal signal peptide occupies residues 1–20; the sequence is MHRSLAGSAVLMLLLLFALG. A propeptide spanning residues 21–62 is cleaved from the precursor; it reads NFVGVQPGLVTRDADNGQLMDNRRNLRLERKTMSLFKSLDKR. Cystine bridges form between cysteine 65/cysteine 79, cysteine 69/cysteine 81, and cysteine 75/cysteine 87. Asparagine 90 bears the Asparagine amide mark.

The protein belongs to the conotoxin P superfamily. As to expression, expressed by the venom duct.

It is found in the secreted. Probable neurotoxin that inhibits ion channels. This chain is Conotoxin Im9.4, found in Conus imperialis (Imperial cone).